The chain runs to 181 residues: ATP-dependent protease subunit HslV (181 aa).

The active site involves T5. Residues S162, C165, and T168 each coordinate Na(+).

This sequence belongs to the peptidase T1B family. HslV subfamily. As to quaternary structure, a double ring-shaped homohexamer of HslV is capped on each side by a ring-shaped HslU homohexamer. The assembly of the HslU/HslV complex is dependent on binding of ATP.

It is found in the cytoplasm. It carries out the reaction ATP-dependent cleavage of peptide bonds with broad specificity.. With respect to regulation, allosterically activated by HslU binding. Its function is as follows. Protease subunit of a proteasome-like degradation complex believed to be a general protein degrading machinery. The polypeptide is ATP-dependent protease subunit HslV (Campylobacter hominis (strain ATCC BAA-381 / DSM 21671 / CCUG 45161 / LMG 19568 / NCTC 13146 / CH001A)).